A 475-amino-acid polypeptide reads, in one-letter code: Adenylyl cyclase-associated protein 1 (475 aa).

Position 2 is an N-acetylalanine (alanine 2). A Phosphotyrosine modification is found at tyrosine 31. Serine 34 carries the post-translational modification Phosphoserine. Lysine 81 is modified (N6-acetyllysine). Disordered regions lie at residues 216–237 (ELSGLPSGPSAGSCPPPPPPCP) and 278–319 (MKTH…KKEP). Positions 218–228 (SGLPSGPSAGS) are enriched in low complexity. The residue at position 287 (lysine 287) is an N6-methyllysine. Phosphoserine occurs at positions 290, 295, and 301. Threonine 307 is modified (phosphothreonine). Phosphoserine occurs at positions 308 and 310. A C-CAP/cofactor C-like domain is found at 319-453 (PAVLELEGKK…EGGDFNEFPV (135 aa)). Lysine 348 participates in a covalent cross-link: Glycyl lysine isopeptide (Lys-Gly) (interchain with G-Cter in SUMO1).

This sequence belongs to the CAP family. Homodimer. Binds actin monomers.

It localises to the cell membrane. Directly regulates filament dynamics and has been implicated in a number of complex developmental and morphological processes, including mRNA localization and the establishment of cell polarity. This chain is Adenylyl cyclase-associated protein 1 (CAP1), found in Homo sapiens (Human).